A 572-amino-acid polypeptide reads, in one-letter code: Protein IQ-DOMAIN 30 (572 aa).

A disordered region spans residues 75-96; the sequence is SDDEIQVSEVQPTDSQDVASVP. The span at 82–92 shows a compositional bias: polar residues; that stretch reads SEVQPTDSQDV. IQ domains are found at residues 108–136 and 137–154; these read QEIA…GIIR and LQAL…VSTL. The calmodulin-binding stretch occupies residues 159-178; the sequence is GIVRLQALARGREIRHSDIG. Disordered regions lie at residues 282–332 and 399–572; these read RPKK…MDNP and IQTH…EWKR. Polar residues-rich tracts occupy residues 291–305 and 400–419; these read PSSN…QTSS and QTHT…VNQI. Residues 428–455 show a composition bias toward basic and acidic residues; sequence AEEKEDVKEERTPKQNHKENSAGKENQK. Polar residues-rich tracts occupy residues 459 to 493, 502 to 514, and 522 to 560; these read KASS…QATK, QGSS…GTTE, and LPSS…SSRE.

This sequence belongs to the IQD family. Binds to multiple calmodulin (CaM) in the presence of Ca(2+) and CaM-like proteins.

The protein localises to the nucleus envelope. Its subcellular location is the cytoplasm. It localises to the cytoskeleton. May be involved in cooperative interactions with calmodulins or calmodulin-like proteins. Recruits calmodulin proteins to microtubules, thus being a potential scaffold in cellular signaling and trafficking. May associate with nucleic acids and regulate gene expression at the transcriptional or post-transcriptional level. The chain is Protein IQ-DOMAIN 30 from Arabidopsis thaliana (Mouse-ear cress).